Here is a 456-residue protein sequence, read N- to C-terminus: Shootin-1 (456 aa).

Met-1 carries the N-acetylmethionine modification. Ser-3 and Ser-4 each carry phosphoserine. Residues 7 to 353 (EKQLQLITSL…RVNQSENSVP (347 aa)) adopt a coiled-coil conformation. Ser-101 and Ser-249 each carry phosphoserine; by PAK1. Disordered regions lie at residues 343-405 (KRVN…VTDL) and 418-445 (KKGV…CESA). The segment covering 352 to 369 (VPPPPPPPPPLPPPPPNP) has biased composition (pro residues). Ser-375 bears the Phosphoserine mark.

This sequence belongs to the shootin family. Interacts with L1CAM; this interaction occurs in axonal growth cones. Interacts with actin filament retrograde flow; this interaction is enhanced in a netrin-1- and PAK1-dependent manner and promotes F-actin-substrate coupling and concomitant formation of traction forces at axonal growth cones. Interacts with RUFY3. Interacts with PFN2. Interacts (via N-terminus) with KIF20B; this interaction is direct and promotes the association of SHTN1 to microtubules in primary neurons. Associates with microtubule. In terms of processing, phosphorylated on Ser-101 and Ser-249 by PAK1 through a CDC42- and RAC1-dependent signaling pathway, which enhances its association with F-actin retrograde flow in filopodia and lamellipodia of axonal growth cones. Phosphorylation on Ser-101 and Ser-249 is increased by netrin-1.

Its subcellular location is the perikaryon. The protein resides in the cell projection. The protein localises to the axon. It localises to the growth cone. It is found in the cytoplasm. Its subcellular location is the cytoskeleton. The protein resides in the filopodium. The protein localises to the lamellipodium. In terms of biological role, involved in the generation of internal asymmetric signals required for neuronal polarization and neurite outgrowth. Mediates netrin-1-induced F-actin-substrate coupling or 'clutch engagement' within the axon growth cone through activation of CDC42, RAC1 and PAK1-dependent signaling pathway, thereby converting the F-actin retrograde flow into traction forces, concomitantly with filopodium extension and axon outgrowth. Plays a role in cytoskeletal organization by regulating the subcellular localization of phosphoinositide 3-kinase (PI3K) activity at the axonal growth cone. Also plays a role in regenerative neurite outgrowth. In the developing cortex, cooperates with KIF20B to promote both the transition from the multipolar to the bipolar stage and the radial migration of cortical neurons from the ventricular zone toward the superficial layer of the neocortex. Involved in the accumulation of phosphatidylinositol 3,4,5-trisphosphate (PIP3) in the growth cone of primary hippocampal neurons. This Pongo abelii (Sumatran orangutan) protein is Shootin-1.